Reading from the N-terminus, the 443-residue chain is UDP-N-acetylmuramate--L-alanine ligase (443 aa).

110–116 (GAHGKTS) lines the ATP pocket.

It belongs to the MurCDEF family.

It is found in the cytoplasm. It carries out the reaction UDP-N-acetyl-alpha-D-muramate + L-alanine + ATP = UDP-N-acetyl-alpha-D-muramoyl-L-alanine + ADP + phosphate + H(+). It functions in the pathway cell wall biogenesis; peptidoglycan biosynthesis. Functionally, cell wall formation. This chain is UDP-N-acetylmuramate--L-alanine ligase, found in Streptococcus agalactiae serotype III (strain NEM316).